Reading from the N-terminus, the 180-residue chain is Translation initiation factor IF-3 (180 aa).

It belongs to the IF-3 family. In terms of assembly, monomer.

It localises to the cytoplasm. Functionally, IF-3 binds to the 30S ribosomal subunit and shifts the equilibrium between 70S ribosomes and their 50S and 30S subunits in favor of the free subunits, thus enhancing the availability of 30S subunits on which protein synthesis initiation begins. This Hyphomonas neptunium (strain ATCC 15444) protein is Translation initiation factor IF-3.